The following is a 296-amino-acid chain: Ribosomal protein L11 methyltransferase (296 aa).

Thr-147, Gly-168, Asp-190, and Asn-232 together coordinate S-adenosyl-L-methionine.

The protein belongs to the methyltransferase superfamily. PrmA family.

Its subcellular location is the cytoplasm. It carries out the reaction L-lysyl-[protein] + 3 S-adenosyl-L-methionine = N(6),N(6),N(6)-trimethyl-L-lysyl-[protein] + 3 S-adenosyl-L-homocysteine + 3 H(+). In terms of biological role, methylates ribosomal protein L11. The sequence is that of Ribosomal protein L11 methyltransferase from Marinomonas sp. (strain MWYL1).